A 354-amino-acid polypeptide reads, in one-letter code: UDP-N-acetylglucosamine--N-acetylmuramyl-(pentapeptide) pyrophosphoryl-undecaprenol N-acetylglucosamine transferase 1 (354 aa).

Residues 12–14 (TAG), Arg163, Ser193, and Gln287 contribute to the UDP-N-acetyl-alpha-D-glucosamine site.

The protein belongs to the glycosyltransferase 28 family. MurG subfamily.

It localises to the cell membrane. It carries out the reaction di-trans,octa-cis-undecaprenyl diphospho-N-acetyl-alpha-D-muramoyl-L-alanyl-D-glutamyl-meso-2,6-diaminopimeloyl-D-alanyl-D-alanine + UDP-N-acetyl-alpha-D-glucosamine = di-trans,octa-cis-undecaprenyl diphospho-[N-acetyl-alpha-D-glucosaminyl-(1-&gt;4)]-N-acetyl-alpha-D-muramoyl-L-alanyl-D-glutamyl-meso-2,6-diaminopimeloyl-D-alanyl-D-alanine + UDP + H(+). Its pathway is cell wall biogenesis; peptidoglycan biosynthesis. Its function is as follows. Cell wall formation. Catalyzes the transfer of a GlcNAc subunit on undecaprenyl-pyrophosphoryl-MurNAc-pentapeptide (lipid intermediate I) to form undecaprenyl-pyrophosphoryl-MurNAc-(pentapeptide)GlcNAc (lipid intermediate II). The sequence is that of UDP-N-acetylglucosamine--N-acetylmuramyl-(pentapeptide) pyrophosphoryl-undecaprenol N-acetylglucosamine transferase 1 from Bacillus thuringiensis (strain Al Hakam).